The sequence spans 462 residues: Bifunctional enzyme LpxC/FabZ (462 aa).

The interval 1–302 is UDP-3-O-acyl-N-acetylglucosamine deacetylase; the sequence is MQKQQTLKDK…MARLIRKEIK (302 aa). 3 residues coordinate Zn(2+): His-78, His-260, and Asp-264. His-287 (proton donor) is an active-site residue. The interval 303–462 is 3-hydroxyacyl-[acyl-carrier-protein] dehydratase; the sequence is QNEAQAPVYN…FMAQIIQNKE (160 aa). His-364 is an active-site residue.

It in the N-terminal section; belongs to the LpxC family. In the C-terminal section; belongs to the thioester dehydratase family. It depends on Zn(2+) as a cofactor.

The protein resides in the cytoplasm. The catalysed reaction is a UDP-3-O-[(3R)-3-hydroxyacyl]-N-acetyl-alpha-D-glucosamine + H2O = a UDP-3-O-[(3R)-3-hydroxyacyl]-alpha-D-glucosamine + acetate. The enzyme catalyses a (3R)-hydroxyacyl-[ACP] = a (2E)-enoyl-[ACP] + H2O. It participates in glycolipid biosynthesis; lipid IV(A) biosynthesis; lipid IV(A) from (3R)-3-hydroxytetradecanoyl-[acyl-carrier-protein] and UDP-N-acetyl-alpha-D-glucosamine: step 2/6. In terms of biological role, catalyzes the hydrolysis of UDP-3-O-myristoyl-N-acetylglucosamine to form UDP-3-O-myristoylglucosamine and acetate, the committed step in lipid A biosynthesis. Involved in unsaturated fatty acids biosynthesis. Catalyzes the dehydration of short chain beta-hydroxyacyl-ACPs and long chain saturated and unsaturated beta-hydroxyacyl-ACPs. The sequence is that of Bifunctional enzyme LpxC/FabZ (lpxC/fabZ) from Porphyromonas gingivalis (strain ATCC BAA-308 / W83).